Reading from the N-terminus, the 144-residue chain is Sirohydrochlorin cobaltochelatase (144 aa).

H9 (proton acceptor) is an active-site residue. H9 lines the Co(2+) pocket. Ni(2+) is bound at residue H9. Substrate contacts are provided by residues E45 and 70-75 (LAPGNH). H75 contacts Co(2+). Residue H75 coordinates Ni(2+). The tract at residues 89–112 (GDDEGGHHHHHDHEHHHHHHDTTA) is disordered. The segment covering 95–108 (HHHHHDHEHHHHHH) has biased composition (basic residues).

It belongs to the CbiX family. CbiXS subfamily. As to quaternary structure, homotetramer; dimer of dimers.

The enzyme catalyses Co-sirohydrochlorin + 2 H(+) = sirohydrochlorin + Co(2+). It catalyses the reaction Ni-sirohydrochlorin + 2 H(+) = sirohydrochlorin + Ni(2+). It functions in the pathway cofactor biosynthesis; adenosylcobalamin biosynthesis; cob(II)yrinate a,c-diamide from sirohydrochlorin (anaerobic route): step 1/10. In terms of biological role, catalyzes the insertion of Co(2+) into sirohydrochlorin as part of the anaerobic pathway to cobalamin biosynthesis. Involved in the biosynthesis of the unique nickel-containing tetrapyrrole coenzyme F430, the prosthetic group of methyl-coenzyme M reductase (MCR), which plays a key role in methanogenesis and anaerobic methane oxidation. Catalyzes the insertion of Ni(2+) into sirohydrochlorin to yield Ni-sirohydrochlorin. In Methanococcus maripaludis (strain DSM 14266 / JCM 13030 / NBRC 101832 / S2 / LL), this protein is Sirohydrochlorin cobaltochelatase.